Consider the following 377-residue polypeptide: MDFDLTDEQRAIQDTFARFSDERIAPQAAALDEARAFPRALFRELAELGFFGMRYPESVGGSGLALSEFCLALSEVARGSMSLAGAVAMQSLMGTKFLQLLGNADIVERLFKPALRGDRIGAICMTEPNAGSDLESIATTATRVDGGYVINGQKTWITSAPVADFFTVFARAGDEKKLTIFLVEKDVPGITVGREIHKMGVWALPTSEVAFDGCFVPDSHRLSKEEGDGEGHLKKTLAEIRIITGAMALGVARAALFAAVRYAGERKQFGKPINRFQAIQLKLADMATGLEAATTLVHRAAWLCDMKRPHHKEAAMAKLFATETAAGICDDAARVLASYGYAMEYPVQRYLRDVRFTLIGGGTSEILKLVIAKEVSS.

FAD is bound by residues 123-132 (ICMTEPNAGS), 156-158 (WIT), Arg266, Gln277, and 363-365 (TSE).

Belongs to the acyl-CoA dehydrogenase family. In terms of assembly, homotetramer. FAD is required as a cofactor.

The enzyme catalyses (2-aminobenzyl)malonyl-CoA + O2 + H(+) = (E)-2-aminocinnamoyl-CoA + H2O2 + CO2. It carries out the reaction benzylmalonyl-CoA + O2 + H(+) = (E)-cinnamoyl-CoA + H2O2 + CO2. Its function is as follows. Involved in degradation of indoleacetate, the most common member of the auxin class of plant hormones. Catalyzes the irreversible oxidative decarboxylation of (2-aminobenzyl)malonyl-CoA to 2-aminocinnamoyl-CoA and CO(2). In vitro, shows high catalytic efficiency with benzylmalonyl-CoA, a chemical analog of the physiological substrate, but otherwise accepts only a few medium-chain alkylmalonyl-CoA compounds as alternative substrates with low activities. This is Benzylmalonyl-CoA dehydrogenase from Aromatoleum aromaticum (strain DSM 19018 / LMG 30748 / EbN1) (Azoarcus sp. (strain EbN1)).